A 416-amino-acid polypeptide reads, in one-letter code: Fusaric acid cluster transcription factor FUB10 (416 aa).

The zn(2)-C6 fungal-type DNA-binding region spans Cys-16 to Cys-47. Residues Ser-50–Ile-92 form a disordered region. The span at Arg-61–Asp-73 shows a compositional bias: polar residues. Residues Thr-74–Ser-86 are compositionally biased toward low complexity.

Its subcellular location is the nucleus. Functionally, transcription factor that regulates the expression of the gene cluster that mediates the biosynthesis of fusaric acid, a mycotoxin with low to moderate toxicity to animals and humans, but with high phytotoxic properties. The protein is Fusaric acid cluster transcription factor FUB10 of Fusarium oxysporum f. sp. lycopersici (strain 4287 / CBS 123668 / FGSC 9935 / NRRL 34936) (Fusarium vascular wilt of tomato).